The primary structure comprises 202 residues: Large ribosomal subunit protein bL9 (202 aa).

Residues 168-202 are disordered; sequence DEAGFTEDYDPNAEPGEIPTELQDEAPAAEATDEA. Over residues 192–202 the composition is skewed to low complexity; sequence EAPAAEATDEA.

The protein belongs to the bacterial ribosomal protein bL9 family.

In terms of biological role, binds to the 23S rRNA. This is Large ribosomal subunit protein bL9 from Rhizorhabdus wittichii (strain DSM 6014 / CCUG 31198 / JCM 15750 / NBRC 105917 / EY 4224 / RW1) (Sphingomonas wittichii).